A 52-amino-acid chain; its full sequence is Alpha-crystallin B chain (52 aa).

Belongs to the small heat shock protein (HSP20) family. In terms of assembly, homodimer. Aggregates with homologous proteins, including alpha-A-crystallin and the small heat shock protein HSPB1, to form large heteromeric complexes.

Functionally, may contribute to the transparency and refractive index of the lens. This chain is Alpha-crystallin B chain (CRYAB), found in Trachemys scripta elegans (Red-eared slider turtle).